Reading from the N-terminus, the 469-residue chain is 3-isopropylmalate dehydratase large subunit (469 aa).

Residues Cys350, Cys410, and Cys413 each coordinate [4Fe-4S] cluster.

This sequence belongs to the aconitase/IPM isomerase family. LeuC type 1 subfamily. In terms of assembly, heterodimer of LeuC and LeuD. Requires [4Fe-4S] cluster as cofactor.

It catalyses the reaction (2R,3S)-3-isopropylmalate = (2S)-2-isopropylmalate. It functions in the pathway amino-acid biosynthesis; L-leucine biosynthesis; L-leucine from 3-methyl-2-oxobutanoate: step 2/4. Catalyzes the isomerization between 2-isopropylmalate and 3-isopropylmalate, via the formation of 2-isopropylmaleate. This Brucella melitensis biotype 2 (strain ATCC 23457) protein is 3-isopropylmalate dehydratase large subunit.